The primary structure comprises 281 residues: Predicted GPI-anchored protein 39 (281 aa).

The signal sequence occupies residues 1–18 (MKATTFTLLLSIATAINA). 2 disordered regions span residues 52 to 94 (HHHG…SASV) and 106 to 227 (VSVS…SSSE). Low complexity-rich tracts occupy residues 69-94 (SSSS…SASV), 106-158 (VSVS…STTD), 167-203 (ATDS…IEET), and 210-227 (SVPS…SSSE). Asn-150 carries an N-linked (GlcNAc...) asparagine glycan. N-linked (GlcNAc...) asparagine glycans are attached at residues Asn-239, Asn-246, Asn-249, and Asn-252. Ser-256 is lipidated: GPI-anchor amidated serine. A propeptide spans 257 to 281 (ANFAIQYGTDYGVAVVAAIVGALLI) (removed in mature form).

It is found in the cell membrane. This chain is Predicted GPI-anchored protein 39 (PGA39), found in Candida albicans (strain SC5314 / ATCC MYA-2876) (Yeast).